A 626-amino-acid polypeptide reads, in one-letter code: Mitogen-activated protein kinase kinase kinase 3 (626 aa).

Residues 44–123 (DVRIKFEHNG…KSLRILLLSQ (80 aa)) enclose the PB1 domain. 3 stretches are compositionally biased toward polar residues: residues 146-155 (QSAGDINTIY), 165-174 (LSVSSQNPGR), and 219-232 (SAEN…QSLD). Disordered regions lie at residues 146-184 (QSAG…YVPE) and 218-262 (SSAE…SDRE). The residue at position 147 (S147) is a Phosphoserine. At S166 the chain carries Phosphoserine; by SGK1. 2 positions are modified to phosphoserine: S250 and S312. The residue at position 337 (S337) is a Phosphoserine; by SGK1. Phosphoserine is present on S340. Residues 362-622 (WRRGKLLGQG…AEELLTHHFA (261 aa)) enclose the Protein kinase domain. ATP-binding positions include 368–376 (LGQGAFGRV) and K391. D489 (proton acceptor) is an active-site residue.

This sequence belongs to the protein kinase superfamily. STE Ser/Thr protein kinase family. MAP kinase kinase kinase subfamily. Binds both upstream activators and downstream substrates in multimolecular complexes. Part of a complex with MAP2K3, RAC1 and CCM2. Interacts with MAP2K5 and SPAG9. Requires Mg(2+) as cofactor. In terms of processing, phosphorylation at Ser-166 and Ser-337 by SGK1 inhibits its activity.

It carries out the reaction L-seryl-[protein] + ATP = O-phospho-L-seryl-[protein] + ADP + H(+). The catalysed reaction is L-threonyl-[protein] + ATP = O-phospho-L-threonyl-[protein] + ADP + H(+). Its activity is regulated as follows. Activated by phosphorylation on Thr-530. Component of a protein kinase signal transduction cascade. Mediates activation of the NF-kappa-B, AP1 and DDIT3 transcriptional regulators. This chain is Mitogen-activated protein kinase kinase kinase 3 (MAP3K3), found in Homo sapiens (Human).